Reading from the N-terminus, the 284-residue chain is RNase adapter protein RapZ (284 aa).

8 to 15 is an ATP binding site; that stretch reads GRSGSGKS. 56-59 is a GTP binding site; the sequence is DVRN. Residues 266–284 form an RNA-binding region; the sequence is RSRGKNAQSRHRTLEKSKS.

It belongs to the RapZ-like family. RapZ subfamily. Homotrimer.

In terms of biological role, modulates the synthesis of GlmS, by affecting the processing and stability of the regulatory small RNA GlmZ. When glucosamine-6-phosphate (GlcN6P) concentrations are high in the cell, RapZ binds GlmZ and targets it to cleavage by RNase E. Consequently, GlmZ is inactivated and unable to activate GlmS synthesis. Under low GlcN6P concentrations, RapZ is sequestered and inactivated by an other regulatory small RNA, GlmY, preventing GlmZ degradation and leading to synthesis of GlmS. The polypeptide is RNase adapter protein RapZ (Sodalis glossinidius (strain morsitans)).